Reading from the N-terminus, the 181-residue chain is Large ribosomal subunit protein uL10 (181 aa).

It belongs to the universal ribosomal protein uL10 family. In terms of assembly, part of the ribosomal stalk of the 50S ribosomal subunit. The N-terminus interacts with L11 and the large rRNA to form the base of the stalk. The C-terminus forms an elongated spine to which L12 dimers bind in a sequential fashion forming a multimeric L10(L12)X complex.

Forms part of the ribosomal stalk, playing a central role in the interaction of the ribosome with GTP-bound translation factors. This is Large ribosomal subunit protein uL10 from Trichormus variabilis (strain ATCC 29413 / PCC 7937) (Anabaena variabilis).